Reading from the N-terminus, the 142-residue chain is Universal stress protein D (142 aa).

It belongs to the universal stress protein A family.

Its subcellular location is the cytoplasm. Required for resistance to DNA-damaging agents. The sequence is that of Universal stress protein D (uspD) from Escherichia coli O157:H7.